The sequence spans 650 residues: Hemocyanin subunit 2 (650 aa).

Serine 120 and serine 172 each carry an O-linked (GalNAc...) serine glycan. The Cu cation site is built by histidine 193, histidine 197, and histidine 225. N-linked (GlcNAc...) asparagine glycosylation is present at asparagine 309. Positions 344, 348, and 384 each coordinate Cu cation.

Belongs to the tyrosinase family. Hemocyanin subfamily. As to quaternary structure, hexamer of a number of different chains, of which five have been identified. Contains one N-glycosylated and three O-glycosylated residues. The position of one of the O-glycosylated residues has not been determined. Post-translationally, O-linked glycan at Ser-120 may be composed of two GalNAc, three Gal, and two N-acetylneuraminic acid units for a total 1525-Da MW. As to expression, hemolymph.

Its subcellular location is the secreted. It is found in the extracellular space. In terms of biological role, hemocyanins are copper-containing oxygen carriers occurring freely dissolved in the hemolymph of many mollusks and arthropods. The sequence is that of Hemocyanin subunit 2 from Carcinus aestuarii (Green crab).